The sequence spans 238 residues: EKC/KEOPS complex subunit SPAP27G11.07c (238 aa).

The 219-residue stretch at 20-238 (EKKLTVVKQG…MRGRKRTMIG (219 aa)) folds into the Protein kinase domain. ATP contacts are provided by residues 26–34 (VKQGAEAIT) and K48. The active-site Proton acceptor is the D148.

This sequence belongs to the protein kinase superfamily. BUD32 family. Component of the EKC/KEOPS complex composed of at least SPAP27G11.07c/BUD32, cgi121, gon7, pgp2 and SPAC4H3.13/PCC1; the whole complex dimerizes.

It is found in the cytoplasm. It localises to the nucleus. The protein resides in the chromosome. The protein localises to the telomere. It catalyses the reaction L-seryl-[protein] + ATP = O-phospho-L-seryl-[protein] + ADP + H(+). It carries out the reaction L-threonyl-[protein] + ATP = O-phospho-L-threonyl-[protein] + ADP + H(+). Its function is as follows. Component of the EKC/KEOPS complex that is required for the formation of a threonylcarbamoyl group on adenosine at position 37 (t(6)A37) in tRNAs that read codons beginning with adenine. The complex is probably involved in the transfer of the threonylcarbamoyl moiety of threonylcarbamoyl-AMP (TC-AMP) to the N6 group of A37. BUD32 has ATPase activity in the context of the EKC/KEOPS complex and likely plays a supporting role to the catalytic subunit KAE1. The EKC/KEOPS complex also promotes both telomere uncapping and telomere elongation. The complex is required for efficient recruitment of transcriptional coactivators. The protein is EKC/KEOPS complex subunit SPAP27G11.07c of Schizosaccharomyces pombe (strain 972 / ATCC 24843) (Fission yeast).